The sequence spans 104 residues: Large ribosomal subunit protein uL23 (104 aa).

It belongs to the universal ribosomal protein uL23 family. Part of the 50S ribosomal subunit. Contacts protein L29, and trigger factor when it is bound to the ribosome.

Its function is as follows. One of the early assembly proteins it binds 23S rRNA. One of the proteins that surrounds the polypeptide exit tunnel on the outside of the ribosome. Forms the main docking site for trigger factor binding to the ribosome. This chain is Large ribosomal subunit protein uL23, found in Nostoc sp. (strain PCC 7120 / SAG 25.82 / UTEX 2576).